The primary structure comprises 260 residues: MDDYTREMMDLKTLVTRTLEKKGVLAKIRAELRASVFEAIEEEDRVIENNEGPPPALLGSCNDRARKLHASPSGRLLSALICEYLDWAQLNHTLIVYQPESNLPKDSWKSELRDFNSNNGFELNRNGDSGPLLLDVLEGFLKFESMTQGMGSSSRRDSETESSSSLESRNPPRRSSASDSLPPQRRPVSASQASDRRAGLSTSGYRKDEFNWRQGNQDTHEEVTRASAALENLQLDRKTRNLTSSWRNVRDGTNEEEGRD.

The LisH domain occupies 73 to 105; it reads SGRLLSALICEYLDWAQLNHTLIVYQPESNLPK. Disordered regions lie at residues 147-224 and 236-260; these read TQGM…EEVT and DRKT…EGRD. Over residues 161 to 175 the composition is skewed to low complexity; it reads ESSSSLESRNPPRRS. Basic and acidic residues predominate over residues 248-260; it reads NVRDGTNEEEGRD.

Interacts with CEN1, LNG1/TRM2 and LNG2/TRM1 (via C-terminus).

It is found in the cytoplasm. Its subcellular location is the cytoskeleton. In terms of biological role, involved in the control of the dynamic organization of the cortical cytoskeleton. May play a role in the organization of microtubule arrays at the centrosome through interaction with centrin 1 (CEN1). This is Protein TONNEAU 1a (TON1A) from Arabidopsis thaliana (Mouse-ear cress).